Consider the following 406-residue polypeptide: Arginine deiminase (406 aa).

C396 functions as the Amidino-cysteine intermediate in the catalytic mechanism.

It belongs to the arginine deiminase family.

It is found in the cytoplasm. It carries out the reaction L-arginine + H2O = L-citrulline + NH4(+). It functions in the pathway amino-acid degradation; L-arginine degradation via ADI pathway; carbamoyl phosphate from L-arginine: step 1/2. The polypeptide is Arginine deiminase (Salmonella typhimurium (strain LT2 / SGSC1412 / ATCC 700720)).